The chain runs to 447 residues: Gamma-glutamyl phosphate reductase (447 aa).

The protein belongs to the gamma-glutamyl phosphate reductase family.

It is found in the cytoplasm. The catalysed reaction is L-glutamate 5-semialdehyde + phosphate + NADP(+) = L-glutamyl 5-phosphate + NADPH + H(+). It participates in amino-acid biosynthesis; L-proline biosynthesis; L-glutamate 5-semialdehyde from L-glutamate: step 2/2. Its function is as follows. Catalyzes the NADPH-dependent reduction of L-glutamate 5-phosphate into L-glutamate 5-semialdehyde and phosphate. The product spontaneously undergoes cyclization to form 1-pyrroline-5-carboxylate. This chain is Gamma-glutamyl phosphate reductase, found in Methanosarcina acetivorans (strain ATCC 35395 / DSM 2834 / JCM 12185 / C2A).